A 439-amino-acid chain; its full sequence is MTSYFDKIEKISFEGEKSTNPFAFKHYDANQVILGKTMAEHLRLAVCYWHTFCWNGNDMFGLGSLERSWQKNPNLLAGAEQKADIAFEFLNKLGVPYYCFHDVDIAPEGNSVREYVQNFHHIVDILERKQVETGIQLLWGTANCFTNPRYMSGAATNPNPEVFAWAATQVFNAMNATQRLGGENYVLWGGREGYETLLNTDLKREREQIGRFMQMVVEHKHKIGFKGTLLIEPKPQEPTKHQYDYDVATVYGFLKQFGLEKEIKVNIEANHATLAGHTFQHEIATACALDIFGSIDANRGDPQLGWDTDQFPNSVEENTLVMYEILKHGGFTTGGFNFDAKIRRQSIDPYDLFYAHIGAIDVLALSLKRAAKMLQEETLQKIVNERYAGWNSELGQHILQGKTSLETLAQLVQQKDLAPKPVSGQQEYLENLVNQVIYS.

Active-site residues include His-101 and Asp-104. Mg(2+) contacts are provided by Glu-232, Glu-268, His-271, Asp-296, Asp-307, Asp-309, and Asp-339.

Belongs to the xylose isomerase family. In terms of assembly, homotetramer. Mg(2+) serves as cofactor.

It localises to the cytoplasm. The enzyme catalyses alpha-D-xylose = alpha-D-xylulofuranose. The protein is Xylose isomerase of Haemophilus influenzae (strain PittGG).